The primary structure comprises 251 residues: Derlin-1 (251 aa).

An N-acetylserine modification is found at Ser-2. Residues 2–15 lie on the Cytoplasmic side of the membrane; the sequence is SDIGDWFRSIPTIT. A helical transmembrane segment spans residues 16–31; the sequence is RYWFAATVAVPLVGKL. Residues 32-69 are Lumenal-facing; sequence GLISPAYFFLWPEAFLYRFQIWRPITATFYFPVGPGTG. Residues 70–89 form a helical membrane-spanning segment; that stretch reads FLYLVNLYFLYQYSTRLETG. Over 90–94 the chain is Cytoplasmic; that stretch reads AFDGR. A helical membrane pass occupies residues 95-115; that stretch reads PADYLFMLLFNWICIVITGLA. The Lumenal segment spans residues 116 to 122; sequence MDMQLLM. The helical transmembrane segment at 123–137 threads the bilayer; it reads IPLIMSVLYVWAQLN. Residues 138-154 lie on the Cytoplasmic side of the membrane; sequence RDMIVSFWFGTRFKACY. The helical transmembrane segment at 155-166 threads the bilayer; sequence LPWVILGFNYII. Topologically, residues 167–170 are lumenal; the sequence is GGSV. Residues 171–189 traverse the membrane as a helical segment; it reads INELIGNLVGHLYFFLMFR. Over 190-251 the chain is Cytoplasmic; the sequence is YPMDLGGRNF…WGQGFRLGDQ (62 aa). Ser-201 bears the Phosphoserine mark. Thr-202 bears the Phosphothreonine mark. Ser-226 carries the phosphoserine modification. The tract at residues 229-251 is disordered; sequence RAADQNGGGGRHNWGQGFRLGDQ. The SHP-box signature appears at 241-248; the sequence is NWGQGFRL.

Belongs to the derlin family. In terms of assembly, homotetramer. The four subunits of the tetramer are arranged in a twofold symmetry. Forms homo- and heterooligomers with DERL2 and DERL3; binding to DERL3 is poorer than that between DERL2 and DERL3. Interacts (via SHP-box motif) with VCP. Interacts with AMFR, SELENOS, SEL1L, SELENOK and SYVN1, as well as with SEL1L-SYVN1 and VCP-SELENOS protein complexes; this interaction is weaker than that observed between DERL2 and these complexes. Interacts with NGLY1 and YOD1. Does not bind to EDEM1. Interacts with DNAJB9. Interacts with RNF103. Interacts with HM13. Interacts with XBP1 isoform 1 (via luminal/ectodomain domain); the interaction obviates the need for ectodomain shedding prior HM13/SPP-mediated XBP1 isoform 1 cleavage. Interacts with the signal recognition particle/SRP and the SRP receptor; in the process of endoplasmic reticulum stress-induced pre-emptive quality control. May interact with UBXN6. Interacts with ZFAND2B; probably through VCP. Interacts with CCDC47. Interacts with C18orf32. May interact with TRAM1. Forms a complex with SVIP and VCP/p97.

The protein localises to the endoplasmic reticulum membrane. Functional component of endoplasmic reticulum-associated degradation (ERAD) for misfolded lumenal proteins. Forms homotetramers which encircle a large channel traversing the endoplasmic reticulum (ER) membrane. This allows the retrotranslocation of misfolded proteins from the ER into the cytosol where they are ubiquitinated and degraded by the proteasome. The channel has a lateral gate within the membrane which provides direct access to membrane proteins with no need to reenter the ER lumen first. May mediate the interaction between VCP and the misfolded protein. Also involved in endoplasmic reticulum stress-induced pre-emptive quality control, a mechanism that selectively attenuates the translocation of newly synthesized proteins into the endoplasmic reticulum and reroutes them to the cytosol for proteasomal degradation. By controlling the steady-state expression of the IGF1R receptor, indirectly regulates the insulin-like growth factor receptor signaling pathway. The chain is Derlin-1 from Bos taurus (Bovine).